We begin with the raw amino-acid sequence, 515 residues long: MKKKILLMMSLISVFFAWQLTQAKQVLAEGKVKVVTTFYPVYEFTKGVIGNDGDVFMLMKAGTEPHDFEPSTKDIKKIQDADAFVYMDDNMETWVSDVKKSLTSKKVTIVKGTGNMLLVAGAGHDHHHEDADKKHEHNKHSEEGHNHAFDPHVWLSPYRSITVVENIRDSLSKAYPEKAENFKANAATYIEKLKELDKDYTAALSDAKQKSFVTQHAAFGYMALDYGLNQISINGVTPDAEPSAKRIATLSKYVKKYGIKYIYFEENASSKVAKTLAKEAGVKAAVLSPLEGLTEKEMKAGQDYFTVMRKNLETLRLTTDVAGKEILPEKDTTKTVYNGYFKDKEVKDRQLSDWSGSWQSVYPYLQDGTLDQVWDYKAKKSKGKMTAAEYKDYYTTGYKTDVEQIKINGKKKTMTFVRNGEKKTFTYTYAGKEILTYPKGNRGVRFMFEAKEADAGEFKYVQFSDHAIAPEKAKHFHLYWGGDSQEKLHKELEHWPTYYGSDLSGREIAQEINAH.

Residues 1 to 28 form the signal peptide; that stretch reads MKKKILLMMSLISVFFAWQLTQAKQVLA. H66 is a binding site for Zn(2+). The interval 125–148 is disordered; the sequence is DHHHEDADKKHEHNKHSEEGHNHA. The tract at residues 129-148 is his-rich loop; that stretch reads EDADKKHEHNKHSEEGHNHA. Zn(2+) contacts are provided by H152, H216, and E291.

Belongs to the bacterial solute-binding protein 9 family.

Functionally, part of the ATP-binding cassette (ABC) transport system AdcABC involved in zinc import. Binds zinc with high affinity and specificity and delivers it to the membrane permease for translocation into the cytoplasm. This Streptococcus pyogenes serotype M1 protein is Zinc-binding protein AdcA (adcA).